We begin with the raw amino-acid sequence, 837 residues long: Ribosome-releasing factor 2, mitochondrial (837 aa).

The N-terminal 29 residues, 1 to 29, are a transit peptide targeting the mitochondrion; that stretch reads MFSINARTKVPIWVPFIARKGFSMSTRQL. The tr-type G domain maps to 40–331; the sequence is LNTRNIGIIA…GVVDYLPSPL (292 aa). GTP-binding positions include 49–56, 113–117, and 167–170; these read AHIDAGKT, DTPGH, and NKMD. The disordered stretch occupies residues 338–359; it reads ITASTSKVSKKQKQKKNSKVSS. Basic residues predominate over residues 345–355; it reads VSKKQKQKKNS.

It belongs to the TRAFAC class translation factor GTPase superfamily. Classic translation factor GTPase family. EF-G/EF-2 subfamily.

Its subcellular location is the mitochondrion. In terms of biological role, mitochondrial GTPase that mediates the disassembly of ribosomes from messenger RNA at the termination of mitochondrial protein biosynthesis. Not involved in the GTP-dependent ribosomal translocation step during translation elongation. The sequence is that of Ribosome-releasing factor 2, mitochondrial from Meyerozyma guilliermondii (strain ATCC 6260 / CBS 566 / DSM 6381 / JCM 1539 / NBRC 10279 / NRRL Y-324) (Yeast).